Here is a 413-residue protein sequence, read N- to C-terminus: Histidine--tRNA ligase (413 aa).

The protein belongs to the class-II aminoacyl-tRNA synthetase family.

It is found in the cytoplasm. It carries out the reaction tRNA(His) + L-histidine + ATP = L-histidyl-tRNA(His) + AMP + diphosphate + H(+). The polypeptide is Histidine--tRNA ligase (Methanosarcina acetivorans (strain ATCC 35395 / DSM 2834 / JCM 12185 / C2A)).